The following is a 361-amino-acid chain: Phosphoserine aminotransferase (361 aa).

L-glutamate is bound at residue Arg42. Pyridoxal 5'-phosphate contacts are provided by residues 76 to 77 (AR), Trp102, Thr153, Asp173, and Gln196. Residue Lys197 is modified to N6-(pyridoxal phosphate)lysine. 238–239 (NT) provides a ligand contact to pyridoxal 5'-phosphate.

It belongs to the class-V pyridoxal-phosphate-dependent aminotransferase family. SerC subfamily. In terms of assembly, homodimer. The cofactor is pyridoxal 5'-phosphate.

It localises to the cytoplasm. It catalyses the reaction O-phospho-L-serine + 2-oxoglutarate = 3-phosphooxypyruvate + L-glutamate. The enzyme catalyses 4-(phosphooxy)-L-threonine + 2-oxoglutarate = (R)-3-hydroxy-2-oxo-4-phosphooxybutanoate + L-glutamate. It functions in the pathway amino-acid biosynthesis; L-serine biosynthesis; L-serine from 3-phospho-D-glycerate: step 2/3. The protein operates within cofactor biosynthesis; pyridoxine 5'-phosphate biosynthesis; pyridoxine 5'-phosphate from D-erythrose 4-phosphate: step 3/5. In terms of biological role, catalyzes the reversible conversion of 3-phosphohydroxypyruvate to phosphoserine and of 3-hydroxy-2-oxo-4-phosphonooxybutanoate to phosphohydroxythreonine. In Yersinia pseudotuberculosis serotype IB (strain PB1/+), this protein is Phosphoserine aminotransferase.